Reading from the N-terminus, the 78-residue chain is Translational regulator CsrA (78 aa).

This sequence belongs to the CsrA/RsmA family. Homodimer; the beta-strands of each monomer intercalate to form a hydrophobic core, while the alpha-helices form wings that extend away from the core.

The protein localises to the cytoplasm. In terms of biological role, a translational regulator that binds mRNA to regulate translation initiation and/or mRNA stability. Usually binds in the 5'-UTR at or near the Shine-Dalgarno sequence preventing ribosome-binding, thus repressing translation. Its main target seems to be the major flagellin gene, while its function is anatagonized by FliW. The chain is Translational regulator CsrA from Borrelia recurrentis (strain A1).